The following is a 61-amino-acid chain: uncharacterized protein (61 aa).

The chain crosses the membrane as a helical span at residues 10–27 (RILFFFFIFFTLFLFNIP).

The protein resides in the membrane. This is an uncharacterized protein from Dictyostelium discoideum (Social amoeba).